Consider the following 2161-residue polypeptide: SH3 and multiple ankyrin repeat domains protein 1 (2161 aa).

A disordered region spans residues Met-1 to Ser-53. Positions Ser-17 to Gly-32 are enriched in low complexity. Residues Pro-33–Ala-47 are compositionally biased toward gly residues. Tyr-186 carries the post-translational modification Phosphotyrosine. 6 ANK repeats span residues Ser-212–Arg-245, Asp-246–Arg-278, Arg-279–Glu-312, Asn-313–Ala-345, Ser-346–Asn-378, and Asn-379–Leu-395. 2 disordered regions span residues Glu-412–Ala-433 and Gly-455–Arg-546. The segment covering Gly-455–Thr-479 has biased composition (low complexity). Residues Pro-527–Gly-542 are compositionally biased toward gly residues. Residue Ser-540 is modified to Phosphoserine. At Arg-544 the chain carries Omega-N-methylarginine. Residues Val-554 to Asn-613 enclose the SH3 domain. In terms of domain architecture, PDZ spans Thr-663–Thr-757. Phosphoserine occurs at positions 671 and 791. The segment at Thr-832–Leu-886 is disordered. A Phosphoserine modification is found at Ser-890. Disordered stretches follow at residues Ser-909–Thr-1229, Arg-1241–Asp-1289, Leu-1353–Ser-1720, Gly-1734–Pro-1785, Leu-1827–Ala-1860, Pro-1892–Leu-1983, and Arg-1996–Leu-2023. A compositionally biased stretch (pro residues) spans Ile-920 to Pro-939. At Arg-950 the chain carries Omega-N-methylarginine. The segment covering Ala-996–Pro-1020 has biased composition (basic residues). 3 positions are modified to omega-N-methylarginine: Arg-1051, Arg-1090, and Arg-1101. Positions Pro-1127–Val-1144 are enriched in pro residues. The segment covering Ser-1164–Pro-1181 has biased composition (low complexity). The segment covering Ser-1199–Pro-1220 has biased composition (pro residues). The span at Arg-1241–Arg-1252 shows a compositional bias: basic and acidic residues. An Asymmetric dimethylarginine modification is found at Arg-1253. The residue at position 1287 (Ser-1287) is a Phosphoserine. Over residues Ala-1359 to Ser-1368 the composition is skewed to basic and acidic residues. A compositionally biased stretch (pro residues) spans Pro-1374–Thr-1391. Residue Arg-1423 is modified to Omega-N-methylarginine. Ser-1436 carries the post-translational modification Phosphoserine. Pro residues-rich tracts occupy residues Gly-1517–Thr-1532 and Pro-1583–Ala-1609. Positions Asp-1618 to Gln-1636 are enriched in polar residues. A compositionally biased stretch (pro residues) spans Asp-1644–Gly-1670. Residues Val-1678–Leu-1688 are compositionally biased toward basic and acidic residues. Residues Ser-1692–Ala-1702 are compositionally biased toward low complexity. 2 stretches are compositionally biased toward gly residues: residues Glu-1703–Val-1718 and Ala-1764–Gly-1774. A compositionally biased stretch (low complexity) spans Gly-1775–Pro-1785. The span at Pro-1844–Leu-1855 shows a compositional bias: pro residues. Arg-1895 carries the omega-N-methylarginine modification. Low complexity-rich tracts occupy residues Ser-1917–Leu-1940, Thr-1954–Thr-1980, and Arg-1996–Ala-2006. Arg-2016, Arg-2036, and Arg-2074 each carry omega-N-methylarginine. The SAM domain maps to Trp-2098–Arg-2161.

Belongs to the SHANK family. As to quaternary structure, may homomultimerize via its SAM domain. Interacts with the C-terminus of SSTR2 via the PDZ domain. Interacts with IGSF9, SHARPIN, SPTAN1, HOMER1 and DLGAP1/GKAP isoforms 1 and 2. Part of a complex with DLG4/PSD-95 and DLGAP1/GKAP. Interacts with BAIAP2. Interacts with HOMER1 and HOMER3. In terms of tissue distribution, expressed in brain particularly in the amygdala, hippocampus, substantia nigra and thalamus. Isoform 2 seems to be expressed ubiquitously.

It localises to the cytoplasm. Its subcellular location is the postsynaptic density. The protein localises to the synapse. In terms of biological role, seems to be an adapter protein in the postsynaptic density (PSD) of excitatory synapses that interconnects receptors of the postsynaptic membrane including NMDA-type and metabotropic glutamate receptors via complexes with GKAP/PSD-95 and Homer, respectively, and the actin-based cytoskeleton. Plays a role in the structural and functional organization of the dendritic spine and synaptic junction. This Homo sapiens (Human) protein is SH3 and multiple ankyrin repeat domains protein 1 (SHANK1).